The primary structure comprises 1001 residues: Copper-transporting ATPase RAN1 (1001 aa).

Positions 1 to 21 (MAPSRRDLQLTPVTGGSSSQI) are disordered. At 1–298 (MAPSRRDLQL…TGEASNMFRR (298 aa)) the chain is on the cytoplasmic side. Polar residues predominate over residues 11–21 (TPVTGGSSSQI). 2 consecutive HMA domains span residues 56-122 (RKIQ…FEAE) and 133-199 (LVGQ…FEGS). Residues cysteine 67, cysteine 70, cysteine 144, and cysteine 147 each contribute to the Cu(+) site. One can recognise an HMA 3; degenerate domain in the interval 207-273 (DKLVLRVDGI…GIEEDGFGKF (67 aa)). Residues 299–320 (FISSLVLSIPLFFIQVICPHIA) traverse the membrane as a helical segment. Residues 321–338 (LFDALLVWRCGPFMMGDW) are Extracellular-facing. The chain crosses the membrane as a helical span at residues 339–358 (LKWALVSVIQFVIGKRFYVA). Residues 359–365 (AWRALRN) lie on the Cytoplasmic side of the membrane. A helical membrane pass occupies residues 366–386 (GSTNMDVLVALGTSASYFYSV). Over 387–403 (GALLYGAVTGFWSPTYF) the chain is Extracellular. The helical transmembrane segment at 404 to 424 (DASAMLITFVLLGKYLESLAK) threads the bilayer. Residues 425-558 (GKTSDAMKKL…KAPIQKFADY (134 aa)) are Cytoplasmic-facing. A helical membrane pass occupies residues 559–581 (VASIFVPVVITLALFTLVGWSIG). Over 582 to 602 (GAVGAYPDEWLPENGTHFVFS) the chain is Extracellular. Residues 603 to 620 (LMFSISVVVIACPCALGL) form a helical membrane-spanning segment. The Cytoplasmic portion of the chain corresponds to 621-931 (ATPTAVMVAT…DLSRKTLTRI (311 aa)). Aspartate 658 (4-aspartylphosphate intermediate) is an active-site residue. Mg(2+)-binding residues include aspartate 877 and aspartate 881. Residues 932-951 (RLNYVFAMAYNVVSIPIAAG) form a helical membrane-spanning segment. Residues 952–963 (VFFPVLRVQLPP) are Extracellular-facing. A helical membrane pass occupies residues 964–982 (WAAGACMALSSVSVVCSSL). Residues 983–1001 (LLRRYKKPRLTTVLKITTE) lie on the Cytoplasmic side of the membrane.

This sequence belongs to the cation transport ATPase (P-type) (TC 3.A.3) family. Type IB subfamily.

Its subcellular location is the membrane. It catalyses the reaction Cu(+)(in) + ATP + H2O = Cu(+)(out) + ADP + phosphate + H(+). In terms of biological role, involved in copper import into the cell. Essential for ethylene signaling, which requires copper. Acts by delivering copper to create functional hormone receptors. The polypeptide is Copper-transporting ATPase RAN1 (RAN1) (Arabidopsis thaliana (Mouse-ear cress)).